The primary structure comprises 92 residues: MTTINLTSETLFNFPCDYHIKVLGKDCEALQRTIYSIVERYTDKLHPNQITKKHSSKGNYMSFSIHIIASSRIQLDAINQDLQDCHLVSYVL.

Belongs to the UPF0250 family.

In Ruthia magnifica subsp. Calyptogena magnifica, this protein is UPF0250 protein Rmag_0541.